We begin with the raw amino-acid sequence, 80 residues long: uncharacterized protein (80 aa).

The signal sequence occupies residues 1–23; the sequence is MKWNNMLKAAGIAVLLFSVFAYA.

This is an uncharacterized protein from Bacillus subtilis (strain 168).